Consider the following 247-residue polypeptide: Sugar fermentation stimulation protein homolog (247 aa).

This sequence belongs to the SfsA family.

The chain is Sugar fermentation stimulation protein homolog from Aeromonas hydrophila subsp. hydrophila (strain ATCC 7966 / DSM 30187 / BCRC 13018 / CCUG 14551 / JCM 1027 / KCTC 2358 / NCIMB 9240 / NCTC 8049).